A 242-amino-acid polypeptide reads, in one-letter code: Phosphomannomutase 2 (242 aa).

The Nucleophile role is filled by Asp-8. 2 residues coordinate Mg(2+): Asp-8 and Asp-10. Residue Asp-10 is the Proton donor/acceptor of the active site. Alpha-D-mannose 1-phosphate contacts are provided by Arg-17, Arg-119, Arg-130, and Arg-137. Lys-145 is subject to N6-acetyllysine. Alpha-D-mannose 1-phosphate is bound by residues Ser-175 and Asp-177. Mg(2+)-binding residues include Asp-205, Phe-217, Asp-219, and Thr-222.

It belongs to the eukaryotic PMM family. Homodimer.

The protein localises to the cytoplasm. The catalysed reaction is alpha-D-mannose 1-phosphate = D-mannose 6-phosphate. The protein operates within nucleotide-sugar biosynthesis; GDP-alpha-D-mannose biosynthesis; alpha-D-mannose 1-phosphate from D-fructose 6-phosphate: step 2/2. In terms of biological role, involved in the synthesis of the GDP-mannose and dolichol-phosphate-mannose required for a number of critical mannosyl transfer reactions. The sequence is that of Phosphomannomutase 2 (Pmm2) from Mus musculus (Mouse).